The following is a 185-amino-acid chain: Probable chorismate pyruvate-lyase (185 aa).

The substrate site is built by R84, L122, and E178.

The protein belongs to the UbiC family.

Its subcellular location is the cytoplasm. The enzyme catalyses chorismate = 4-hydroxybenzoate + pyruvate. Its pathway is cofactor biosynthesis; ubiquinone biosynthesis. Functionally, removes the pyruvyl group from chorismate, with concomitant aromatization of the ring, to provide 4-hydroxybenzoate (4HB) for the ubiquinone pathway. The sequence is that of Probable chorismate pyruvate-lyase from Hydrogenovibrio crunogenus (strain DSM 25203 / XCL-2) (Thiomicrospira crunogena).